Consider the following 504-residue polypeptide: NADH-quinone oxidoreductase subunit N (504 aa).

A run of 14 helical transmembrane segments spans residues 9 to 29 (IALL…LSII), 38 to 58 (AVLT…HMMW), 78 to 98 (VLYV…GYVW), 114 to 134 (LLIA…IVLF), 135 to 155 (LGIE…VFSK), 164 to 184 (YIIL…FIYC), 216 to 236 (IVIG…CVPF), 254 to 274 (YLAT…LLIL), 282 to 302 (LHIF…LMAI), 309 to 329 (RMLA…LIAL), 341 to 361 (ISVY…IVNI), 392 to 412 (VIFV…GFIG), 425 to 447 (LWFL…LKII), and 476 to 496 (FMVI…QFIV).

The protein belongs to the complex I subunit 2 family. As to quaternary structure, NDH-1 is composed of 13 different subunits. Subunits NuoA, H, J, K, L, M, N constitute the membrane sector of the complex.

It is found in the cell inner membrane. The catalysed reaction is a quinone + NADH + 5 H(+)(in) = a quinol + NAD(+) + 4 H(+)(out). Functionally, NDH-1 shuttles electrons from NADH, via FMN and iron-sulfur (Fe-S) centers, to quinones in the respiratory chain. The immediate electron acceptor for the enzyme in this species is believed to be ubiquinone. Couples the redox reaction to proton translocation (for every two electrons transferred, four hydrogen ions are translocated across the cytoplasmic membrane), and thus conserves the redox energy in a proton gradient. The protein is NADH-quinone oxidoreductase subunit N of Blochmanniella floridana.